A 351-amino-acid chain; its full sequence is Rhodopsin (351 aa).

Residues Met-1 to Ala-36 are Extracellular-facing. Residues Asn-2 and Asn-15 are each glycosylated (N-linked (GlcNAc...) asparagine). A helical membrane pass occupies residues Phe-37–Val-61. Over Thr-62–Asn-73 the chain is Cytoplasmic. A helical transmembrane segment spans residues Tyr-74–Tyr-96. Topologically, residues Ser-97–Cys-110 are extracellular. Cys-110 and Cys-187 are disulfide-bonded. The chain crosses the membrane as a helical span at residues Asn-111–Ile-133. The 'Ionic lock' involved in activated form stabilization signature appears at Glu-134–Trp-136. The Cytoplasmic segment spans residues Glu-134 to His-152. The helical transmembrane segment at Ala-153–Val-173 threads the bilayer. Residues Gly-174–Ser-202 are Extracellular-facing. A glycan (N-linked (GlcNAc...) asparagine) is linked at Asn-200. Residues Phe-203–Gly-224 form a helical membrane-spanning segment. The Cytoplasmic segment spans residues Arg-225 to Arg-252. Residues Met-253–Phe-274 traverse the membrane as a helical segment. At Ile-275–Leu-286 the chain is on the extracellular side. The chain crosses the membrane as a helical span at residues Phe-287 to Cys-308. Residue Lys-296 is modified to N6-(retinylidene)lysine. Residues Met-309–Ala-351 are Cytoplasmic-facing. Residue Cys-323 is the site of S-palmitoyl cysteine attachment. The disordered stretch occupies residues Gly-330–Ala-351. The segment covering Ala-335–Ala-351 has biased composition (low complexity).

It belongs to the G-protein coupled receptor 1 family. Opsin subfamily. Phosphorylated on some or all of the serine and threonine residues present in the C-terminal region. In terms of processing, contains one covalently linked retinal chromophore.

Its subcellular location is the membrane. The protein resides in the cell projection. It is found in the cilium. It localises to the photoreceptor outer segment. Its function is as follows. Photoreceptor required for image-forming vision at low light intensity. While most salt water fish species use retinal as chromophore, most freshwater fish use 3-dehydroretinal, or a mixture of retinal and 3-dehydroretinal. Light-induced isomerization of 11-cis to all-trans retinal triggers a conformational change that activates signaling via G-proteins. Subsequent receptor phosphorylation mediates displacement of the bound G-protein alpha subunit by arrestin and terminates signaling. The polypeptide is Rhodopsin (rho) (Neoniphon sammara (Spotfin squirrelfish)).